The chain runs to 335 residues: MRPILLQGHERALTQIRYNRDGDIIFSTAKDQHICAWYAHNGERLGTYHGHQGAIWTVDVDPTTTIIASGAADNTVRLWDVKTGKCLKTWDFNTAVKRVEFNEDATQLLAVTEQRMGFLGTIVVLDINLDVNGPQSDDRALTITCAESKATVAGWSYMSKYIIAGHEDGSVSQYDAKTGELLFNTQVHEPDLQVTDLQWSPDRTYFITASKDKTAKLVNARDLEVMKTYVTDTPLNSASITPKKDFVILGGGQAAMDVTTTSARQGKFEARFYHKIFEEEIGRVRGHFGPLNTVAVDPNGKGYASGGEDGYVRVHQFDKGYFDFTYEVERQARQQ.

WD repeat units lie at residues 8–47 (GHER…RLGT), 50–91 (GHQG…KTWD), 145–184 (CAES…LLFN), 189–228 (EPDL…VMKT), and 286–325 (GHFG…FDFT).

The protein belongs to the eIF-3 subunit I family. In terms of assembly, component of the eukaryotic translation initiation factor 3 (eIF-3) complex.

The protein resides in the cytoplasm. Its function is as follows. Component of the eukaryotic translation initiation factor 3 (eIF-3) complex, which is involved in protein synthesis of a specialized repertoire of mRNAs and, together with other initiation factors, stimulates binding of mRNA and methionyl-tRNAi to the 40S ribosome. The eIF-3 complex specifically targets and initiates translation of a subset of mRNAs involved in cell proliferation. This is Eukaryotic translation initiation factor 3 subunit I (tif34) from Botryotinia fuckeliana (strain B05.10) (Noble rot fungus).